Reading from the N-terminus, the 326-residue chain is Probable cell division protein WhiA (326 aa).

Positions 275–308 form a DNA-binding region, H-T-H motif; sequence SLEELGALADPPLTKDAIAGRIRRLLALADKRAR.

This sequence belongs to the WhiA family.

Involved in cell division and chromosome segregation. This chain is Probable cell division protein WhiA, found in Salinispora tropica (strain ATCC BAA-916 / DSM 44818 / JCM 13857 / NBRC 105044 / CNB-440).